A 327-amino-acid chain; its full sequence is Cyclic AMP-responsive element-binding protein 1 (327 aa).

Disordered stretches follow at residues 1 to 26 and 94 to 113; these read MTME…QQMT and SEDS…RREI. The 60-residue stretch at 87 to 146 folds into the KID domain; that stretch reads QISTIAESEDSQESVDSVTDSQKRREILSRRPSYRKILNDLSSDAPGVPRIEEEKSEEET. Position 119 is a phosphoserine; by CaMK1, CaMK2, CaMK4, PKB/AKT1 or PKB/AKT2, RPS6KA3, RPS6KA4, RPS6KA5, SGK1 and TSSK4 (Ser119). Residue Lys122 forms a Glycyl lysine isopeptide (Lys-Gly) (interchain with G-Cter in SUMO2) linkage. Residues 125–148 form a disordered region; it reads NDLSSDAPGVPRIEEEKSEEETSA. Ser128 bears the Phosphoserine mark. Ser257 is subject to Phosphoserine; by HIPK2. Residues 269-327 form the bZIP domain; that stretch reads ARKREVRLMKNREAARECRRKKKEYVKCLENRVAVLENQNKTLIEELKALKDLYCHKSD. The interval 270–295 is basic motif; that stretch reads RKREVRLMKNREAARECRRKKKEYVK. Residues Lys271 and Lys290 each participate in a glycyl lysine isopeptide (Lys-Gly) (interchain with G-Cter in SUMO1) cross-link. Positions 297–318 are leucine-zipper; sequence LENRVAVLENQNKTLIEELKAL.

It belongs to the bZIP family. As to quaternary structure, interacts with PPRC1. Binds DNA as a dimer. This dimer is stabilized by magnesium ions. Interacts, through the bZIP domain, with the coactivators CRTC1/TORC1, CRTC2/TORC2 and CRTC3/TORC3. When phosphorylated on Ser-119, binds CREBBP. Interacts with CREBL2; regulates CREB1 phosphorylation, stability and transcriptional activity. Interacts (phosphorylated form) with TOX3. Interacts with ARRB1. Binds to HIPK2. Interacts with SGK1. Interacts with TSSK4; this interaction facilitates phosphorylation on Ser-119. Forms a complex with KMT2A and CREBBP. Interacts with TOX4; CREB1 is required for full induction of TOX4-dependent activity and the interaction is increased by cAMP and inhibited by insulin. In terms of assembly, (Microbial infection) Interacts with hepatitis B virus/HBV protein X. (Microbial infection) Interacts with HTLV-1 protein Tax. In terms of processing, stimulated by phosphorylation. Phosphorylation of both Ser-119 and Ser-128 in the SCN regulates the activity of CREB and participates in circadian rhythm generation. Phosphorylation of Ser-119 allows CREBBP binding. In liver, phosphorylation is induced by fasting or glucagon in a circadian fashion. CREBL2 positively regulates phosphorylation at Ser-119 thereby stimulating CREB1 transcriptional activity. Phosphorylated upon calcium influx by CaMK4 and CaMK2 on Ser-119. CaMK4 is much more potent than CaMK2 in activating CREB. Phosphorylated by CaMK2 on Ser-128. Phosphorylation of Ser-128 blocks CREB-mediated transcription even when Ser-119 is phosphorylated. Phosphorylated by CaMK1. Phosphorylation of Ser-257 by HIPK2 in response to genotoxic stress promotes CREB1 activity, facilitating the recruitment of the coactivator CBP. Phosphorylated at Ser-119 by RPS6KA3, RPS6KA4 and RPS6KA5 in response to mitogenic or stress stimuli. Phosphorylated by TSSK4 on Ser-119. Post-translationally, sumoylated with SUMO1. Sumoylation on Lys-290, but not on Lys-271, is required for nuclear localization of this protein. Sumoylation is enhanced under hypoxia, promoting nuclear localization and stabilization.

It is found in the nucleus. Phosphorylation-dependent transcription factor that stimulates transcription upon binding to the DNA cAMP response element (CRE), a sequence present in many viral and cellular promoters. Transcription activation is enhanced by the TORC coactivators which act independently of Ser-119 phosphorylation. Involved in different cellular processes including the synchronization of circadian rhythmicity and the differentiation of adipose cells. Regulates the expression of apoptotic and inflammatory response factors in cardiomyocytes in response to ERFE-mediated activation of AKT signaling. This chain is Cyclic AMP-responsive element-binding protein 1 (CREB1), found in Homo sapiens (Human).